Here is a 469-residue protein sequence, read N- to C-terminus: Glutamate--tRNA ligase (469 aa).

The short motif at Pro-9–Gly-19 is the 'HIGH' region element. Zn(2+) contacts are provided by Cys-98, Cys-100, Cys-125, and Asp-127. Residues Lys-236 to Arg-240 carry the 'KMSKS' region motif. ATP is bound at residue Lys-239.

It belongs to the class-I aminoacyl-tRNA synthetase family. Glutamate--tRNA ligase type 1 subfamily. In terms of assembly, monomer. Zn(2+) is required as a cofactor.

It is found in the cytoplasm. It catalyses the reaction tRNA(Glu) + L-glutamate + ATP = L-glutamyl-tRNA(Glu) + AMP + diphosphate. In terms of biological role, catalyzes the attachment of glutamate to tRNA(Glu) in a two-step reaction: glutamate is first activated by ATP to form Glu-AMP and then transferred to the acceptor end of tRNA(Glu). The protein is Glutamate--tRNA ligase of Shewanella putrefaciens (strain CN-32 / ATCC BAA-453).